We begin with the raw amino-acid sequence, 558 residues long: Undecaprenyl phosphate-alpha-4-amino-4-deoxy-L-arabinose arabinosyl transferase 1 (558 aa).

The next 12 helical transmembrane spans lie at 4 to 24 (GAGLWLGLLAVFFVLTYLVPL), 87 to 107 (FASVFSTGLSALLVFTVSWTV), 115 to 135 (LLAALIFLSLLLVFGVGTYSV), 136 to 156 (LDPMIALWLNAAMAAHVFALR), 178 to 198 (FMTKGFLALVVPAIAVLPVAL), 207 to 227 (LGYGALAALLAVLVNLPWALA), 257 to 277 (APFWFYLPVLALGSLPWLGLL), 295 to 315 (FLLLCWVVMPLLFFSVAKGKL), 316 to 336 (LTYILPCMAPLALLLAAYGRE), 355 to 375 (AFALCAIVALLLAGSGLLPWA), 383 to 403 (WPRIVIGTLVFAGWLCFAAVS), and 411 to 431 (WALAAFCPLLLSLLVGQIIPQ).

It belongs to the glycosyltransferase 83 family.

It localises to the cell inner membrane. The catalysed reaction is 4-amino-4-deoxy-alpha-L-arabinopyranosyl di-trans,octa-cis-undecaprenyl phosphate + lipid IVA = lipid IIA + di-trans,octa-cis-undecaprenyl phosphate.. The protein operates within lipopolysaccharide metabolism; 4-amino-4-deoxy-beta-L-arabinose-lipid A biosynthesis. In terms of biological role, catalyzes the transfer of the L-Ara4N moiety of the glycolipid undecaprenyl phosphate-alpha-L-Ara4N to lipid A. The modified arabinose is attached to lipid A and is required for resistance to polymyxin and cationic antimicrobial peptides. The chain is Undecaprenyl phosphate-alpha-4-amino-4-deoxy-L-arabinose arabinosyl transferase 1 from Sodalis glossinidius (strain morsitans).